The primary structure comprises 165 residues: Large ribosomal subunit protein uL10 (165 aa).

This sequence belongs to the universal ribosomal protein uL10 family. In terms of assembly, part of the ribosomal stalk of the 50S ribosomal subunit. The N-terminus interacts with L11 and the large rRNA to form the base of the stalk. The C-terminus forms an elongated spine to which L12 dimers bind in a sequential fashion forming a multimeric L10(L12)X complex.

Its function is as follows. Forms part of the ribosomal stalk, playing a central role in the interaction of the ribosome with GTP-bound translation factors. This chain is Large ribosomal subunit protein uL10, found in Enterobacter sp. (strain 638).